The sequence spans 351 residues: Uroporphyrinogen decarboxylase (351 aa).

Substrate contacts are provided by residues 25–29, aspartate 74, tyrosine 151, serine 206, and histidine 325; that span reads RQAGR.

It belongs to the uroporphyrinogen decarboxylase family. In terms of assembly, homodimer.

Its subcellular location is the cytoplasm. The catalysed reaction is uroporphyrinogen III + 4 H(+) = coproporphyrinogen III + 4 CO2. It participates in porphyrin-containing compound metabolism; protoporphyrin-IX biosynthesis; coproporphyrinogen-III from 5-aminolevulinate: step 4/4. Its function is as follows. Catalyzes the decarboxylation of four acetate groups of uroporphyrinogen-III to yield coproporphyrinogen-III. The chain is Uroporphyrinogen decarboxylase from Prosthecochloris aestuarii (strain DSM 271 / SK 413).